The chain runs to 602 residues: Aspartate--tRNA(Asp/Asn) ligase (602 aa).

E175 serves as a coordination point for L-aspartate. The segment at 199 to 202 (QIFK) is aspartate. Residue R221 coordinates L-aspartate. ATP is bound by residues 221-223 (RDE) and Q230. H458 contributes to the L-aspartate binding site. An ATP-binding site is contributed by E492. R499 contributes to the L-aspartate binding site. ATP is bound at residue 544 to 547 (GLDR).

This sequence belongs to the class-II aminoacyl-tRNA synthetase family. Type 1 subfamily. In terms of assembly, homodimer.

It localises to the cytoplasm. The enzyme catalyses tRNA(Asx) + L-aspartate + ATP = L-aspartyl-tRNA(Asx) + AMP + diphosphate. Aspartyl-tRNA synthetase with relaxed tRNA specificity since it is able to aspartylate not only its cognate tRNA(Asp) but also tRNA(Asn). Reaction proceeds in two steps: L-aspartate is first activated by ATP to form Asp-AMP and then transferred to the acceptor end of tRNA(Asp/Asn). This chain is Aspartate--tRNA(Asp/Asn) ligase, found in Cupriavidus taiwanensis (strain DSM 17343 / BCRC 17206 / CCUG 44338 / CIP 107171 / LMG 19424 / R1) (Ralstonia taiwanensis (strain LMG 19424)).